A 261-amino-acid chain; its full sequence is uncharacterized protein (261 aa).

It belongs to the FrhB family.

This is an uncharacterized protein from Methanocaldococcus jannaschii (strain ATCC 43067 / DSM 2661 / JAL-1 / JCM 10045 / NBRC 100440) (Methanococcus jannaschii).